Here is a 125-residue protein sequence, read N- to C-terminus: MQWQGRSVRKPSGGRYHTSQGKKRTEIGRAPAETHIGEERRRIVRTFGGNQKVRALRLEYATVSNPATGETKKTKIEAVEANSADPNYVRRKLLTKGAIIKTEMGRARIVSRPSQDGVVNAVLLA.

The interval 1 to 35 is disordered; it reads MQWQGRSVRKPSGGRYHTSQGKKRTEIGRAPAETH.

The protein belongs to the eukaryotic ribosomal protein eS8 family. In terms of assembly, part of the 30S ribosomal subunit.

The polypeptide is Small ribosomal subunit protein eS8 (Methanoculleus marisnigri (strain ATCC 35101 / DSM 1498 / JR1)).